The sequence spans 658 residues: Putative arrestin-related trafficking adapter C2D10.04 (658 aa).

Disordered stretches follow at residues 21 to 107 (LHHQ…LTWS) and 638 to 658 (REEA…EIPR). Residues 39–81 (NRSSNSGLNRRNSVFGLPSSGLSSRLSKPSLSSINNSNNSSSN) show a composition bias toward low complexity. Polar residues predominate over residues 96 to 107 (RNMSNKPPLTWS). Serine 653 bears the Phosphoserine mark.

This sequence belongs to the ALY1 family.

The protein localises to the cytoplasm. May regulate endocytosis in response to extracellular stimuli. This is Putative arrestin-related trafficking adapter C2D10.04 from Schizosaccharomyces pombe (strain 972 / ATCC 24843) (Fission yeast).